Consider the following 316-residue polypeptide: 4-hydroxy-3-methylbut-2-enyl diphosphate reductase (316 aa).

Residue cysteine 12 participates in [4Fe-4S] cluster binding. (2E)-4-hydroxy-3-methylbut-2-enyl diphosphate contacts are provided by histidine 41 and histidine 74. Residues histidine 41 and histidine 74 each coordinate dimethylallyl diphosphate. 2 residues coordinate isopentenyl diphosphate: histidine 41 and histidine 74. [4Fe-4S] cluster is bound at residue cysteine 96. Histidine 124 serves as a coordination point for (2E)-4-hydroxy-3-methylbut-2-enyl diphosphate. Histidine 124 is a binding site for dimethylallyl diphosphate. Residue histidine 124 participates in isopentenyl diphosphate binding. Residue glutamate 126 is the Proton donor of the active site. Threonine 167 contributes to the (2E)-4-hydroxy-3-methylbut-2-enyl diphosphate binding site. Residue cysteine 197 participates in [4Fe-4S] cluster binding. (2E)-4-hydroxy-3-methylbut-2-enyl diphosphate contacts are provided by serine 225, serine 226, asparagine 227, and serine 269. Dimethylallyl diphosphate is bound by residues serine 225, serine 226, asparagine 227, and serine 269. Isopentenyl diphosphate-binding residues include serine 225, serine 226, asparagine 227, and serine 269.

This sequence belongs to the IspH family. In terms of assembly, homodimer. [4Fe-4S] cluster is required as a cofactor.

The enzyme catalyses isopentenyl diphosphate + 2 oxidized [2Fe-2S]-[ferredoxin] + H2O = (2E)-4-hydroxy-3-methylbut-2-enyl diphosphate + 2 reduced [2Fe-2S]-[ferredoxin] + 2 H(+). The catalysed reaction is dimethylallyl diphosphate + 2 oxidized [2Fe-2S]-[ferredoxin] + H2O = (2E)-4-hydroxy-3-methylbut-2-enyl diphosphate + 2 reduced [2Fe-2S]-[ferredoxin] + 2 H(+). It participates in isoprenoid biosynthesis; dimethylallyl diphosphate biosynthesis; dimethylallyl diphosphate from (2E)-4-hydroxy-3-methylbutenyl diphosphate: step 1/1. It functions in the pathway isoprenoid biosynthesis; isopentenyl diphosphate biosynthesis via DXP pathway; isopentenyl diphosphate from 1-deoxy-D-xylulose 5-phosphate: step 6/6. Functionally, catalyzes the conversion of 1-hydroxy-2-methyl-2-(E)-butenyl 4-diphosphate (HMBPP) into a mixture of isopentenyl diphosphate (IPP) and dimethylallyl diphosphate (DMAPP). Acts in the terminal step of the DOXP/MEP pathway for isoprenoid precursor biosynthesis. The sequence is that of 4-hydroxy-3-methylbut-2-enyl diphosphate reductase from Enterobacter sp. (strain 638).